The sequence spans 169 residues: Large ribosomal subunit protein uL5 (169 aa).

The protein belongs to the universal ribosomal protein uL5 family. As to quaternary structure, part of the 50S ribosomal subunit; contacts the 5S rRNA and probably tRNA. Forms a bridge to the 30S subunit in the 70S ribosome.

Its function is as follows. This is one of the proteins that bind and probably mediate the attachment of the 5S RNA into the large ribosomal subunit, where it forms part of the central protuberance. In the 70S ribosome it contacts protein S13 of the 30S subunit (bridge B1b), connecting the 2 subunits; this bridge is implicated in subunit movement. May contact the P site tRNA; the 5S rRNA and some of its associated proteins might help stabilize positioning of ribosome-bound tRNAs. This chain is Large ribosomal subunit protein uL5, found in Methanosarcina barkeri (strain Fusaro / DSM 804).